The sequence spans 325 residues: Melanocortin receptor 5 (325 aa).

The Extracellular segment spans residues 1–37 (MNSSSTLTVLNLTLNASEDGILGSNVKNKSLACEEMG). N-linked (GlcNAc...) asparagine glycans are attached at residues Asn2, Asn11, Asn15, and Asn28. A helical transmembrane segment spans residues 38–61 (IAVEVFLTLGLVSLLENILVIGAI). Residues 62–73 (VKNKNLHSPMYF) are Cytoplasmic-facing. The helical transmembrane segment at 74–97 (FVGSLAVADMLVSMSNAWETVTIY) threads the bilayer. At 98–114 (LLNNKHLVIADTFVRHI) the chain is on the extracellular side. Residues 115–138 (DNVFDSMICISVVASMCSLLAIAV) traverse the membrane as a helical segment. The Cytoplasmic portion of the chain corresponds to 139–155 (DRYITIFYALRYHHIMT). The chain crosses the membrane as a helical span at residues 156-179 (ARRSGVIIACIWTFCISCGIVFII). Topologically, residues 180–186 (YYESKYV) are extracellular. A helical transmembrane segment spans residues 187–211 (IICLISMFFTMLFFMVSLYIHMFLL). Over 212–239 (ARNHVKRIAASPRYNSVRQRTSMKGAIT) the chain is Cytoplasmic. The chain crosses the membrane as a helical span at residues 240-265 (LTMLLGIFIVCWSPFFLHLILMISCP). Residues 266–273 (QNVYCSCF) are Extracellular-facing. The helical transmembrane segment at 274–297 (MSYFNMYLILIMCNSVIDPLIYAL) threads the bilayer. Residues 298 to 325 (RSQEMRRTFKEIVCCHGFRRPCRLLGGY) lie on the Cytoplasmic side of the membrane. Residues Cys311 and Cys312 are each lipidated (S-palmitoyl cysteine).

The protein belongs to the G-protein coupled receptor 1 family. In terms of tissue distribution, skin, adrenal gland, skeletal muscle, bone marrow, spleen, thymus, gonads, uterus and brain.

Its subcellular location is the cell membrane. In terms of biological role, receptor for MSH (alpha, beta and gamma) and ACTH. The activity of this receptor is mediated by G proteins which activate adenylate cyclase. This receptor is a possible mediator of the immunomodulation properties of melanocortins. This chain is Melanocortin receptor 5 (Mc5r), found in Mus musculus (Mouse).